We begin with the raw amino-acid sequence, 292 residues long: Trimeric intracellular cation channel type B (292 aa).

At 1 to 16 (MEYPWDDLTLAFSRTS) the chain is on the lumenal side. A helical transmembrane segment spans residues 17-34 (MFPFFDIAHYLVSVMALK). The Cytoplasmic portion of the chain corresponds to 35–47 (QRPGAVAAAWNNP). A helical membrane pass occupies residues 48-69 (LASWLSAMLHCFGGGILSCMLL). Residues 70–82 (AESPLKFLTNHTN) are Lumenal-facing. The helical transmembrane segment at 83-100 (ILLASSIWYIVFFCPRDL) threads the bilayer. Residues 101–103 (VSQ) are Cytoplasmic-facing. A helical membrane pass occupies residues 104–122 (GYSYQPIQFLAAGMKEVTR). Positions 118 and 122 each coordinate a 1,2-diacyl-sn-glycero-3-phospho-(1D-myo-inositol-4,5-bisphosphate). The Lumenal portion of the chain corresponds to 123–140 (TWKIVGGVSDANSYYRNA). The helical transmembrane segment at 141–158 (WIVMIVVGWARGAGGAVV) threads the bilayer. The Cytoplasmic portion of the chain corresponds to 159–178 (TACEQLLKGDWKPEGDEWLK). The chain crosses the membrane as a helical span at residues 179 to 195 (MSFPCKITLLGSIMFTF). Residues 196-206 (QHTRHLAISKH) are Lumenal-facing. The chain crosses the membrane as a helical span at residues 207-225 (DLMFLYTIFLVTIKVTMMM). At 226 to 292 (TKDTAVTLTP…GAKRHAKKED (67 aa)) the chain is on the cytoplasmic side. Residues 248–292 (RQQQQFSSSEKKTEVKPSSNGSASSASKRGAEPSGGAKRHAKKED) are disordered. Positions 265 to 274 (SSNGSASSAS) are enriched in low complexity.

The protein belongs to the TMEM38 family. As to quaternary structure, homotrimer; conformation seems to be controled by binding to diacylglycerol (DAG). As to expression, widely expressed.

It is found in the endoplasmic reticulum membrane. The enzyme catalyses K(+)(in) = K(+)(out). Its activity is regulated as follows. Channel activity is activated by increased cytosolic Ca(2+) levels and blocked by luminal high Ca(2+) levels. Intracellular monovalent cation channel required for maintenance of rapid intracellular calcium release. Acts as a potassium counter-ion channel that functions in synchronization with calcium release from intracellular stores. Activated by increased cytosolic Ca(2+) levels. The polypeptide is Trimeric intracellular cation channel type B (Tmem38b) (Mus musculus (Mouse)).